Here is a 399-residue protein sequence, read N- to C-terminus: S-adenosylmethionine synthase (399 aa).

Residue histidine 17 coordinates ATP. Aspartate 19 contributes to the Mg(2+) binding site. Glutamate 45 is a K(+) binding site. Residues glutamate 58 and glutamine 101 each contribute to the L-methionine site. The flexible loop stretch occupies residues 101 to 111 (QSPDIAQGVDE). Residues 177–179 (DAK), 244–245 (RF), aspartate 253, 259–260 (RK), alanine 276, and lysine 280 contribute to the ATP site. L-methionine is bound at residue aspartate 253. Lysine 284 is a binding site for L-methionine.

It belongs to the AdoMet synthase family. Homotetramer; dimer of dimers. It depends on Mg(2+) as a cofactor. K(+) is required as a cofactor.

Its subcellular location is the cytoplasm. It catalyses the reaction L-methionine + ATP + H2O = S-adenosyl-L-methionine + phosphate + diphosphate. The protein operates within amino-acid biosynthesis; S-adenosyl-L-methionine biosynthesis; S-adenosyl-L-methionine from L-methionine: step 1/1. In terms of biological role, catalyzes the formation of S-adenosylmethionine (AdoMet) from methionine and ATP. The overall synthetic reaction is composed of two sequential steps, AdoMet formation and the subsequent tripolyphosphate hydrolysis which occurs prior to release of AdoMet from the enzyme. In Listeria monocytogenes serotype 4b (strain CLIP80459), this protein is S-adenosylmethionine synthase.